Here is a 499-residue protein sequence, read N- to C-terminus: Maturase K (499 aa).

The protein belongs to the intron maturase 2 family. MatK subfamily.

The protein resides in the plastid. It localises to the chloroplast. In terms of biological role, usually encoded in the trnK tRNA gene intron. Probably assists in splicing its own and other chloroplast group II introns. This chain is Maturase K, found in Chamaecrista fasciculata (Showy partridge pea).